The chain runs to 315 residues: Cytochrome c biogenesis protein CcsA (315 aa).

7 consecutive transmembrane segments (helical) span residues 14–34 (VVSL…ISFW), 72–92 (ISNL…AQLF), 101–121 (IVSA…SFVL), 146–166 (VIMC…GVFL), 221–241 (SITA…VWAN), 255–272 (TWAL…HTRL), and 282–302 (AILA…VNLL).

This sequence belongs to the CcmF/CycK/Ccl1/NrfE/CcsA family. May interact with ccs1.

The protein resides in the cellular thylakoid membrane. Its function is as follows. Required during biogenesis of c-type cytochromes (cytochrome c6 and cytochrome f) at the step of heme attachment. This is Cytochrome c biogenesis protein CcsA from Prochlorococcus marinus (strain NATL1A).